Reading from the N-terminus, the 321-residue chain is G-protein coupled receptor homolog ECRF3 (321 aa).

Over 1–34 (MEVKLDFSSEDFSNYSYNYSGDIYYGDVAPCVVN) the chain is Extracellular. Residues N14 and N18 are each glycosylated (N-linked (GlcNAc...) asparagine; by host). The chain crosses the membrane as a helical span at residues 35-51 (FLISESALAFIYVLMFL). Residues 52 to 76 (CNAIGNSLVLRTFLKYRAQAQSFDY) lie on the Cytoplasmic side of the membrane. A helical transmembrane segment spans residues 77–93 (LMMGFCLNSLFLAGYLL). The Extracellular segment spans residues 94–124 (MRLLRMFEIFMNTELCKLEAFFLNLSIYWSP). N-linked (GlcNAc...) asparagine; by host glycosylation occurs at N117. The helical transmembrane segment at 125-141 (FILVFISVLRCLLIFCA) threads the bilayer. Over 142–149 (TRLWVKKT) the chain is Cytoplasmic. Residues 150–166 (LIGQVFLCCSFVLACFG) form a helical membrane-spanning segment. Residues 167–196 (ALPHVMVTSYYEPSSCIEEDGVLTEQLRTK) lie on the Extracellular side of the membrane. The chain crosses the membrane as a helical span at residues 197–215 (LNTFHTWYSFAGPLFITVI). Over 216–234 (CYSMSCYKLFKTKLSKRAE) the chain is Cytoplasmic. The helical transmembrane segment at 235 to 251 (VVTIITMTTLLFIVFCI) threads the bilayer. Over 252 to 286 (PYYIMESIDTLLRVGVIEETCAKRSAIVYGIQCTY) the chain is Extracellular. A helical transmembrane segment spans residues 287–303 (MLLVLYYCMLPLMFAMF). The Cytoplasmic segment spans residues 304–321 (GSLFRQRMAAWCKTICHC).

It belongs to the G-protein coupled receptor 1 family.

The protein localises to the host cell membrane. In terms of biological role, may be highly relevant to the process of cellular transformation and rapid T-cell proliferation effected by HVS during latent infections of T-cells in susceptible hosts. The protein is G-protein coupled receptor homolog ECRF3 (74) of Saimiri sciureus (Common squirrel monkey).